We begin with the raw amino-acid sequence, 419 residues long: uncharacterized protein (419 aa).

This is an uncharacterized protein from Caenorhabditis elegans.